The following is a 593-amino-acid chain: Bifunctional lycopene cyclase/phytoene synthase (593 aa).

Positions 1–242 (MAYDYALVHL…IVFGMAVFDQ (242 aa)) are lycopene beta-cyclase. The next 7 membrane-spanning stretches (helical) occupy residues 8–28 (VHLK…YPIF), 31–51 (IHFL…LPWD), 77–97 (IEEL…YILL), 117–136 (IARG…LYGV), 147–167 (YLGL…TVAG), 169–189 (FILT…TVYL), and 231–251 (ILIV…FAFP). The segment at 249-593 (AFPHLFPKVP…KTVLKALFSA (345 aa)) is phytoene synthase.

In the N-terminal section; belongs to the lycopene beta-cyclase family. The protein in the C-terminal section; belongs to the phytoene/squalene synthase family.

The protein localises to the membrane. The catalysed reaction is all-trans-lycopene = gamma-carotene. The enzyme catalyses gamma-carotene = all-trans-beta-carotene. It catalyses the reaction 2 (2E,6E,10E)-geranylgeranyl diphosphate = 15-cis-phytoene + 2 diphosphate. It functions in the pathway carotenoid biosynthesis; beta-carotene biosynthesis. The protein operates within carotenoid biosynthesis; phytoene biosynthesis; all-trans-phytoene from geranylgeranyl diphosphate: step 1/1. Functionally, bifunctional enzyme that catalyzes the reactions from geranylgeranyl diphosphate to phytoene (phytoene synthase) and lycopene to beta-carotene via the intermediate gamma-carotene (lycopene cyclase). The sequence is that of Bifunctional lycopene cyclase/phytoene synthase from Podospora anserina (strain S / ATCC MYA-4624 / DSM 980 / FGSC 10383) (Pleurage anserina).